Reading from the N-terminus, the 238-residue chain is Ribonuclease PH (238 aa).

Phosphate is bound by residues Arg-86 and 124–126 (GTR).

The protein belongs to the RNase PH family. Homohexameric ring arranged as a trimer of dimers.

The catalysed reaction is tRNA(n+1) + phosphate = tRNA(n) + a ribonucleoside 5'-diphosphate. Its function is as follows. Phosphorolytic 3'-5' exoribonuclease that plays an important role in tRNA 3'-end maturation. Removes nucleotide residues following the 3'-CCA terminus of tRNAs; can also add nucleotides to the ends of RNA molecules by using nucleoside diphosphates as substrates, but this may not be physiologically important. Probably plays a role in initiation of 16S rRNA degradation (leading to ribosome degradation) during starvation. The polypeptide is Ribonuclease PH (Actinobacillus pleuropneumoniae serotype 5b (strain L20)).